We begin with the raw amino-acid sequence, 154 residues long: Endoribonuclease YbeY (154 aa).

Positions 114, 118, and 124 each coordinate Zn(2+).

It belongs to the endoribonuclease YbeY family. Zn(2+) serves as cofactor.

It is found in the cytoplasm. Its function is as follows. Single strand-specific metallo-endoribonuclease involved in late-stage 70S ribosome quality control and in maturation of the 3' terminus of the 16S rRNA. This Histophilus somni (strain 129Pt) (Haemophilus somnus) protein is Endoribonuclease YbeY.